The chain runs to 770 residues: Protein PAT1 homolog 1 (770 aa).

The interval Met1–Val42 is disordered. The segment at Met1–Glu84 is region A; interaction with DDX6/RCK. Positions Met1 to Arg397 are involved in nuclear foci localization. A compositionally biased stretch (acidic residues) spans Leu7–Asn33. The tract at residues Asn85–His388 is region N; interaction with decapping machinery. Positions Leu86 to Ile95 match the Nuclear export signal motif. Ser177 is modified (phosphoserine). Thr178 is subject to Phosphothreonine. Phosphoserine is present on residues Ser179 and Ser184. Residue Thr194 is modified to Phosphothreonine. Arg217, Arg223, and Arg263 each carry asymmetric dimethylarginine. Positions Arg223–Arg397 are involved in RNA-binding. Ser278 is modified (phosphoserine). An Asymmetric dimethylarginine modification is found at Arg284. Disordered regions lie at residues Ser320–Gln341 and Gln369–Asp394. Residues Ala321–Gly337 are compositionally biased toward pro residues. The segment covering Gln369 to Asn380 has biased composition (low complexity). The residue at position 385 (Arg385) is an Omega-N-methylarginine. The span at Arg385 to Asp394 shows a compositional bias: basic and acidic residues. The tract at residues Arg389–Glu448 is region H. Residues Lys398–Arg770 form an involved in nuclear speckle localization region. Residues Met449–Arg770 form a region C region.

It belongs to the PAT1 family. Interacts (via region A) with DDX6/RCK. Interacts (via region H and region C) with LSM1 and LSM4. Interacts (via region N) with DCP1A, DCP2, EDC3, EDC4 and XRN1. Interacts with the CCR4-NOT complex. Interacts with the Lsm-containing SMN-Sm protein complex. Interacts with EIF4ENIF1/4E-T.

The protein resides in the cytoplasm. It localises to the P-body. The protein localises to the nucleus. Its subcellular location is the PML body. It is found in the nucleus speckle. In terms of biological role, RNA-binding protein involved in deadenylation-dependent decapping of mRNAs, leading to the degradation of mRNAs. Acts as a scaffold protein that connects deadenylation and decapping machinery. Required for cytoplasmic mRNA processing body (P-body) assembly. The sequence is that of Protein PAT1 homolog 1 (Patl1) from Rattus norvegicus (Rat).